The sequence spans 363 residues: Class I histocompatibility antigen, Gogo-B*0201 alpha chain (363 aa).

The signal sequence occupies residues 1-24 (MQVTAPRTLLLLLSAALALTETWA). Residues 25-114 (GSHSMRYFHT…LRGYYNQSED (90 aa)) form an alpha-1 region. Residues 25–308 (GSHSMRYFHT…EPSSQSTIPI (284 aa)) lie on the Extracellular side of the membrane. An N-linked (GlcNAc...) asparagine glycan is attached at asparagine 110. The tract at residues 115–206 (GSHTIQRMYG…ENGKETLQRA (92 aa)) is alpha-2. 2 disulfide bridges follow: cysteine 125/cysteine 188 and cysteine 227/cysteine 283. The segment at 207–298 (DPPKTHVTHH…GLPEPLTLRW (92 aa)) is alpha-3. One can recognise an Ig-like C1-type domain in the interval 209 to 297 (PKTHVTHHPI…EGLPEPLTLR (89 aa)). The tract at residues 299–308 (EPSSQSTIPI) is connecting peptide. The chain crosses the membrane as a helical span at residues 309-333 (VGIVAGLAVLVVTVAVVAVVAAVMC). The Cytoplasmic portion of the chain corresponds to 334-363 (RRKSSGGKGGSYSQAASSDSAQGSDVSLTA). A disordered region spans residues 336–363 (KSSGGKGGSYSQAASSDSAQGSDVSLTA). Positions 344–363 (SYSQAASSDSAQGSDVSLTA) are enriched in low complexity.

Belongs to the MHC class I family. As to quaternary structure, heterodimer of an alpha chain and a beta chain (beta-2-microglobulin).

The protein localises to the membrane. Its function is as follows. Involved in the presentation of foreign antigens to the immune system. This chain is Class I histocompatibility antigen, Gogo-B*0201 alpha chain, found in Gorilla gorilla gorilla (Western lowland gorilla).